Consider the following 157-residue polypeptide: Putative gamma-glutamylcyclotransferase CG2811 (157 aa).

Residue 14–17 participates in substrate binding; sequence YGTL. Glutamate 89 acts as the Proton acceptor in catalysis.

This sequence belongs to the gamma-glutamylcyclotransferase family.

Putative gamma-glutamylcyclotransferase. This chain is Putative gamma-glutamylcyclotransferase CG2811, found in Drosophila melanogaster (Fruit fly).